Here is a 432-residue protein sequence, read N- to C-terminus: Chorismate synthase aro-2 (432 aa).

Active-site residues include His-17, His-106, and Asp-367. Positions 406–432 (LKQTINSGKDTVGNGVSENVQESDLAQ) are disordered. Positions 408 to 432 (QTINSGKDTVGNGVSENVQESDLAQ) are enriched in polar residues.

This sequence belongs to the chorismate synthase family. As to quaternary structure, homotetramer.

It catalyses the reaction 5-O-(1-carboxyvinyl)-3-phosphoshikimate = chorismate + phosphate. It carries out the reaction FMNH2 + NADP(+) = FMN + NADPH + 2 H(+). It participates in metabolic intermediate biosynthesis; chorismate biosynthesis; chorismate from D-erythrose 4-phosphate and phosphoenolpyruvate: step 7/7. Bifunctional chorismate synthase and flavin reductase that catalyzes the conversion of 5-enolpyruvylshikimate 3-phosphate (EPSP) to form chorismate, which is the last common intermediate in the synthesis of the three aromatic amino acids phenylalanine, tyrosine and tryptophan. Acts also as a flavin reductase (FR) able to generate reduced flavin mononucleotide in the presence of NADPH. The protein is Chorismate synthase aro-2 of Neurospora crassa (strain ATCC 24698 / 74-OR23-1A / CBS 708.71 / DSM 1257 / FGSC 987).